Reading from the N-terminus, the 382-residue chain is 8-amino-7-oxononanoate synthase (382 aa).

Substrate is bound at residue Arg26. Pyridoxal 5'-phosphate is bound at residue Gly104–Tyr105. His129 serves as a coordination point for substrate. Pyridoxal 5'-phosphate contacts are provided by residues Ser175, Asp200–His203, and Thr232–Lys235. The residue at position 235 (Lys235) is an N6-(pyridoxal phosphate)lysine. Residue Thr345 coordinates substrate.

This sequence belongs to the class-II pyridoxal-phosphate-dependent aminotransferase family. BioF subfamily. In terms of assembly, homodimer. Pyridoxal 5'-phosphate is required as a cofactor.

It catalyses the reaction 6-carboxyhexanoyl-[ACP] + L-alanine + H(+) = (8S)-8-amino-7-oxononanoate + holo-[ACP] + CO2. It participates in cofactor biosynthesis; biotin biosynthesis. Functionally, catalyzes the decarboxylative condensation of pimeloyl-[acyl-carrier protein] and L-alanine to produce 8-amino-7-oxononanoate (AON), [acyl-carrier protein], and carbon dioxide. The polypeptide is 8-amino-7-oxononanoate synthase (bioF) (Mycolicibacterium smegmatis (strain ATCC 700084 / mc(2)155) (Mycobacterium smegmatis)).